The following is a 94-amino-acid chain: Large ribosomal subunit protein uL23 (94 aa).

It belongs to the universal ribosomal protein uL23 family. As to quaternary structure, part of the 50S ribosomal subunit. Contacts protein L29, and trigger factor when it is bound to the ribosome.

Functionally, one of the early assembly proteins it binds 23S rRNA. One of the proteins that surrounds the polypeptide exit tunnel on the outside of the ribosome. Forms the main docking site for trigger factor binding to the ribosome. This is Large ribosomal subunit protein uL23 from Roseiflexus castenholzii (strain DSM 13941 / HLO8).